The chain runs to 2063 residues: Nuclear receptor coactivator 6 (2063 aa).

Positions 1–928 (MVLDDLPNLE…PPRKKKNSQQ (928 aa)) are TBP/GTF2A-binding region. The CREBBP-binding region stretch occupies residues 1–1057 (MVLDDLPNLE…LPVSQNVHPP (1057 aa)). The tract at residues 1–1310 (MVLDDLPNLE…QTHKLDSVVV (1310 aa)) is NCOA1-binding region. Arg-95 carries the asymmetric dimethylarginine modification. 3 disordered regions span residues 184 to 251 (IPPG…VNRQ), 281 to 549 (QQQQ…APQL), and 789 to 811 (RPPG…ANND). The span at 281-300 (QQQQQLQARPPQQHQQQQPQ) shows a compositional bias: low complexity. Composition is skewed to polar residues over residues 353–368 (MQQQ…TVQT), 379–406 (GSQQ…QMKS), 417–453 (PLQQ…QQQM), 462–502 (PLPQ…QGPQ), and 522–549 (GQAN…APQL). The tract at residues 773–927 (VNNSPSQVMG…KPPRKKKNSQ (155 aa)) is NCOA6IP-binding region. A Phosphoserine; by MAPK; in vitro modification is found at Ser-884. Positions 887-891 (LVNLL) match the LXXLL motif 1 motif. Disordered stretches follow at residues 899–1278 (HFGV…LNPT), 1310–1353 (VNSG…KAPK), and 1448–1474 (EVKM…PSVE). The segment covering 903–912 (NNKQNNTNAN) has biased composition (low complexity). Residues 913–925 (KPKKKKPPRKKKN) are compositionally biased toward basic residues. Residues 982–992 (PLQQMPPQLMQ) are compositionally biased toward low complexity. Pro residues predominate over residues 995–1020 (APPPQPPQQQPQPQLPQQQQPPPPSQ). Residues 1021-1041 (PQSQQQQQQQQQMMMMLMMQQ) show a composition bias toward low complexity. An asymmetric dimethylarginine mark is found at Arg-1047 and Arg-1058. Positions 1063 to 1075 (PDSQRMPMQQSGS) are enriched in polar residues. Arg-1096 bears the Asymmetric dimethylarginine mark. Composition is skewed to polar residues over residues 1104-1125 (PLGS…SSSP), 1173-1191 (LSAT…SLPS), and 1202-1214 (APTQ…TPNR). The span at 1219-1232 (PYYPQTPNNRPPST) shows a compositional bias: pro residues. A compositionally biased stretch (polar residues) spans 1310 to 1320 (VNSGKQSNSGA). Positions 1322-1345 (KRASPSNSRRSSPGSSRKTTPSPG) are enriched in low complexity. An LXXLL motif 2 motif is present at residues 1491–1495 (LSQLL). An EP300/CRSP3-binding region region spans residues 1641 to 2063 (SEGQSAAQSN…AVQSKRRKSK (423 aa)). The disordered stretch occupies residues 1738–1820 (ATPVQLPSPP…VSSSKGKGKV (83 aa)). The segment covering 1750–1763 (SSPVVPSHPPVQQV) has biased composition (low complexity). Polar residues predominate over residues 1773-1798 (PQVNTSADQNTLPSSQSTTMVSPLLT). Positions 1799-1815 (NSPGSSGNRRSPVSSSK) are enriched in low complexity. 2 positions are modified to N6-acetyllysine: Lys-1819 and Lys-1822. 2 disordered regions span residues 1837–1908 (GSLE…LPGG) and 1995–2063 (IVSG…RKSK). Basic and acidic residues predominate over residues 2002–2011 (EPKEIVEKSK). Position 2018 is a phosphoserine (Ser-2018).

In terms of assembly, monomer and homodimer. Interacts with RBM39. Interacts in vitro with the basal transcription factors GTF2A and TBP, suggesting an autonomous transactivation function. Interacts with NCOA1, CRSP3, RBM14, the histone acetyltransferases EP300 and CREBBP, and with the methyltransferases NCOA6IP and PRMT2/HRMT1L1. Component of the MLL2/3 complex (also named ASCOM complex), at least composed of KMT2D/MLL2 or KMT2C/MLL3, ASH2L, RBBP5, WDR5, NCOA6, DPY30, KDM6A, PAXIP1/PTIP, PAGR1 and alpha- and beta-tubulin. Interacts with ZNF335; may enhance ligand-dependent transcriptional activation by nuclear hormone receptors. In terms of processing, phosphorylated by PRKDC. Post-translationally, phosphorylation on Ser-884 leads to a strong decrease in binding to ESR1 and ESR2. As to expression, ubiquitous. Highly expressed in brain, prostate, testis and ovary; weakly expressed in lung, thymus and small intestine.

It localises to the nucleus. Nuclear receptor coactivator that directly binds nuclear receptors and stimulates the transcriptional activities in a hormone-dependent fashion. Coactivates expression in an agonist- and AF2-dependent manner. Involved in the coactivation of different nuclear receptors, such as for steroids (GR and ERs), retinoids (RARs and RXRs), thyroid hormone (TRs), vitamin D3 (VDR) and prostanoids (PPARs). Probably functions as a general coactivator, rather than just a nuclear receptor coactivator. May also be involved in the coactivation of the NF-kappa-B pathway. May coactivate expression via a remodeling of chromatin and its interaction with histone acetyltransferase proteins. In Homo sapiens (Human), this protein is Nuclear receptor coactivator 6 (NCOA6).